The following is a 77-amino-acid chain: Ras-related C3 botulinum toxin substrate 1 (77 aa).

22–24 provides a ligand contact to GTP; that stretch reads KLD. Lysine 53 is covalently cross-linked (Glycyl lysine isopeptide (Lys-Gly) (interchain with G-Cter in ubiquitin)). Position 65–66 (65–66) interacts with GTP; it reads AL.

This sequence belongs to the small GTPase superfamily. Rho family. Interacts with NISCH. Interacts with PIP5K1A. Interacts with the GTP-bound form of RAB7A. Interacts with SRGAP2. Interacts with CYFIP1/SRA-1. Interacts with PLXNB3. Interacts with ARHGDIA; the interaction is induced by SEMA5A, mediated through PLXNB3 and inactivates and stabilizes RAC1. Interacts (GTP-bound form preferentially) with PKN2 (via the REM repeats); the interaction stimulates autophosphorylation and phosphorylation of PKN2. Interacts with the GEF proteins PREX1, RASGRF2, FARP1, FARP2, DOCK1, DOCK2 and DOCK7, which promote the exchange between GDP and GTP, and therefore activate it. Interacts with PARD6A, PARD6B and PARD6G in a GTP-dependent manner. Part of a quaternary complex containing PARD3, some PARD6 protein (PARD6A, PARD6B or PARD6G) and some atypical PKC protein (PRKCI or PRKCZ), which plays a central role in epithelial cell polarization. Found in a trimeric complex composed of DOCK1 and ELMO1, which plays a central role in phagocytosis of apoptotic cells. Interacts with RALBP1 via its effector domain. Interacts with PLXNB1. Part of a complex with MAP2K3, MAP3K3, CCM2 and DEF6. Interacts with BAIAP2, BAIAP2L1 and DEF6. Interacts with Y.pseudotuberculosis YPKA and PLCB2. Interacts with NOXA1. Interacts with ARHGEF2. Interacts with TBC1D2. Interacts with UNKL. Interacts with USP6. Interacts with SPATA13. Interacts with ARHGEF16; mediates activation of RAC1 by EPHA2. Interacts with ITGB4. Interacts with S100A8 and calprotectin (S100A8/9). Interacts with PACSIN2. Interacts (when active) with PPP5C (via TPR repeats); activates PPP5C phosphatase activity and translocates PPP5C to the cell membrane. Interacts with RAPH1 (via Ras associating and PH domains). Interacts with MTSS2 (via IMD domain); this interaction may be important to potentiate PDGF-induced RAC1 activation. Interacts with PAK2. Interacts (GTP-bound form) with SH3RF1 and SH3RF3. Found in a complex with SH3RF1, MAPK8IP1/JIP1, MAP3K11/MLK3, MAP2K7/MKK7 and MAPK8/JNK1. Interacts (both active GTP- or inactive GDP-bound forms) with SH3RF2. Interacts (GTP-bound form preferentially) with CYRIB. Interacts with DOCK4 (via DOCKER domain); functions as a guanine nucleotide exchange factor (GEF) for RAC1. Interacts with GARRE1. Interacts with RAP1GDS1. May interact with ARHGAP36. Interacts with DSG3; the interaction is required for DSG3 translocation to cell-cell junctions, organization of cortical F-actin bundles and actin anchoring at cell-cell junctions. Component of the phagocyte NADPH oxidase complex composed of an obligatory core heterodimer formed by the membrane proteins CYBA and CYBB and the cytosolic regulatory subunits NCF1/p47-phox, NCF2/p67-phox, NCF4/p40-phox and the small GTPase RAC1 or RAC2. Interacts with NCF2. The N-terminus is blocked. In terms of processing, GTP-bound active form is ubiquitinated by HACE1, leading to its degradation by the proteasome.

Its subcellular location is the cytoplasm. The protein resides in the membrane. The protein localises to the melanosome. It localises to the cell projection. It is found in the lamellipodium. Its subcellular location is the dendrite. The protein resides in the synapse. The protein localises to the nucleus. It catalyses the reaction GTP + H2O = GDP + phosphate + H(+). Its activity is regulated as follows. Regulated by guanine nucleotide exchange factors (GEFs) which promote the exchange of bound GDP for free GTP, GTPase activating proteins (GAPs) which increase the GTP hydrolysis activity, and GDP dissociation inhibitors which inhibit the dissociation of the nucleotide from the GTPase. GTP hydrolysis is stimulated by ARHGAP30. Its function is as follows. Plasma membrane-associated small GTPase which cycles between active GTP-bound and inactive GDP-bound states. In its active state, binds to a variety of effector proteins to regulate cellular responses such as secretory processes, phagocytosis of apoptotic cells, epithelial cell polarization, neurons adhesion, migration and differentiation, and growth-factor induced formation of membrane ruffles. Rac1 p21/rho GDI heterodimer is the active component of the cytosolic factor sigma 1, which is involved in stimulation of the NADPH oxidase activity in macrophages. Essential for the SPATA13-mediated regulation of cell migration and adhesion assembly and disassembly. Stimulates PKN2 kinase activity. In concert with RAB7A, plays a role in regulating the formation of RBs (ruffled borders) in osteoclasts. In podocytes, promotes nuclear shuttling of NR3C2; this modulation is required for a proper kidney functioning. Required for atypical chemokine receptor ACKR2-induced LIMK1-PAK1-dependent phosphorylation of cofilin (CFL1) and for up-regulation of ACKR2 from endosomal compartment to cell membrane, increasing its efficiency in chemokine uptake and degradation. In neurons, is involved in dendritic spine formation and synaptic plasticity. In hippocampal neurons, involved in spine morphogenesis and synapse formation, through local activation at synapses by guanine nucleotide exchange factors (GEFs), such as ARHGEF6/ARHGEF7/PIX. In synapses, seems to mediate the regulation of F-actin cluster formation performed by SHANK3. In neurons, plays a crucial role in regulating GABA(A) receptor synaptic stability and hence GABAergic inhibitory synaptic transmission through its role in PAK1 activation and eventually F-actin stabilization. Required for DSG3 translocation to cell-cell junctions, DSG3-mediated organization of cortical F-actin bundles and anchoring of actin at cell junctions; via interaction with DSG3. Subunit of the phagocyte NADPH oxidase complex that mediates the transfer of electrons from cytosolic NADPH to O2 to produce the superoxide anion (O2(-)). This chain is Ras-related C3 botulinum toxin substrate 1, found in Cavia porcellus (Guinea pig).